A 426-amino-acid polypeptide reads, in one-letter code: MTKFETVRGMKDYIGIDAEKIRYLESIFRDLAIKYGYSEIITPVVEEFKLFALKGGEELRETMYVFKDKADRELSLRPEITPSVARAYIQNLQSSPKPIRLFYFGTVYRYDEPQYGRYREFRQAGIEMIGDSSILADLEVLDLLYNFYDKLNLSNDIIIKINNIGIFRKIMDKYNIEDNLQEHILHLIDKNKINEALDILEKNLKNKDIIDFFNKILTKKDTKLEDIESLAELEEVSRLDIKSEFLYLFRLSRILSNLNIKFKIDLGFVRGLAYYTGLIFEVLHPSVQFSIAGGGRYDKLIELYGGLPSPAIGFAIGVERTLLVIKDLKVEEPVNVIVIGMSEDTIPSMFMVSRILRKEEYKVVINTKDQPLSKLLPYYASQGFKVAIIIGKQELEKNMITVRNLITRKQISVPLENIEDAIKQTL.

It belongs to the class-II aminoacyl-tRNA synthetase family.

The protein localises to the cytoplasm. It catalyses the reaction tRNA(His) + L-histidine + ATP = L-histidyl-tRNA(His) + AMP + diphosphate + H(+). The polypeptide is Histidine--tRNA ligase (Saccharolobus islandicus (strain M.16.27) (Sulfolobus islandicus)).